The primary structure comprises 434 residues: Trigger factor (434 aa).

Positions 161-246 (GKRVSIDFVG…VNKVEARELP (86 aa)) constitute a PPIase FKBP-type domain.

The protein belongs to the FKBP-type PPIase family. Tig subfamily.

The protein resides in the cytoplasm. It carries out the reaction [protein]-peptidylproline (omega=180) = [protein]-peptidylproline (omega=0). In terms of biological role, involved in protein export. Acts as a chaperone by maintaining the newly synthesized protein in an open conformation. Functions as a peptidyl-prolyl cis-trans isomerase. The protein is Trigger factor of Vibrio parahaemolyticus serotype O3:K6 (strain RIMD 2210633).